We begin with the raw amino-acid sequence, 420 residues long: ATP phosphoribosyltransferase regulatory subunit (420 aa).

The protein belongs to the class-II aminoacyl-tRNA synthetase family. HisZ subfamily. In terms of assembly, heteromultimer composed of HisG and HisZ subunits.

Its subcellular location is the cytoplasm. It participates in amino-acid biosynthesis; L-histidine biosynthesis; L-histidine from 5-phospho-alpha-D-ribose 1-diphosphate: step 1/9. Required for the first step of histidine biosynthesis. May allow the feedback regulation of ATP phosphoribosyltransferase activity by histidine. The protein is ATP phosphoribosyltransferase regulatory subunit of Bacillus cereus (strain ATCC 14579 / DSM 31 / CCUG 7414 / JCM 2152 / NBRC 15305 / NCIMB 9373 / NCTC 2599 / NRRL B-3711).